A 423-amino-acid polypeptide reads, in one-letter code: Kynurenine--oxoglutarate transaminase 1 (423 aa).

Gly-36 contacts substrate. Lys-82 is modified (N6-succinyllysine). Asn-185 serves as a coordination point for substrate. Lys-247 is modified (N6-(pyridoxal phosphate)lysine). Arg-398 serves as a coordination point for substrate.

Belongs to the class-I pyridoxal-phosphate-dependent aminotransferase family. In terms of assembly, homodimer. Pyridoxal 5'-phosphate is required as a cofactor. As to expression, detected in kidney.

The protein localises to the cytoplasm. It is found in the cytosol. The protein resides in the mitochondrion matrix. The enzyme catalyses L-kynurenine + 2-oxoglutarate = kynurenate + L-glutamate + H2O. The catalysed reaction is 3-phenylpyruvate + L-glutamine = 2-oxoglutaramate + L-phenylalanine. It carries out the reaction an S-substituted L-cysteine + H2O = a thiol + pyruvate + NH4(+). Its pathway is amino-acid degradation; L-kynurenine degradation; kynurenate from L-kynurenine: step 1/2. Inhibited by aminooxyacetate (in vitro). Catalyzes the irreversible transamination of the L-tryptophan metabolite L-kynurenine to form kynurenic acid (KA), an intermediate in the tryptophan catabolic pathway which is also a broad spectrum antagonist of the three ionotropic excitatory amino acid receptors among others. Metabolizes the cysteine conjugates of certain halogenated alkenes and alkanes to form reactive metabolites. Catalyzes the beta-elimination of S-conjugates and Se-conjugates of L-(seleno)cysteine, resulting in the cleavage of the C-S or C-Se bond. The sequence is that of Kynurenine--oxoglutarate transaminase 1 from Rattus norvegicus (Rat).